Reading from the N-terminus, the 188-residue chain is Elongation factor P-like protein (188 aa).

It belongs to the elongation factor P family.

The chain is Elongation factor P-like protein from Xanthomonas campestris pv. campestris (strain 8004).